The sequence spans 382 residues: 1-deoxy-D-xylulose 5-phosphate reductoisomerase (382 aa).

Positions 10, 11, 12, 13, 36, 37, 38, and 121 each coordinate NADPH. A 1-deoxy-D-xylulose 5-phosphate-binding site is contributed by K122. An NADPH-binding site is contributed by E123. D147 provides a ligand contact to Mn(2+). Residues S148, E149, S173, and H196 each coordinate 1-deoxy-D-xylulose 5-phosphate. E149 is a Mn(2+) binding site. NADPH is bound at residue G202. S209, N214, K215, and E218 together coordinate 1-deoxy-D-xylulose 5-phosphate. E218 is a Mn(2+) binding site.

It belongs to the DXR family. Requires Mg(2+) as cofactor. It depends on Mn(2+) as a cofactor.

It carries out the reaction 2-C-methyl-D-erythritol 4-phosphate + NADP(+) = 1-deoxy-D-xylulose 5-phosphate + NADPH + H(+). The protein operates within isoprenoid biosynthesis; isopentenyl diphosphate biosynthesis via DXP pathway; isopentenyl diphosphate from 1-deoxy-D-xylulose 5-phosphate: step 1/6. Its function is as follows. Catalyzes the NADPH-dependent rearrangement and reduction of 1-deoxy-D-xylulose-5-phosphate (DXP) to 2-C-methyl-D-erythritol 4-phosphate (MEP). In Geobacillus kaustophilus (strain HTA426), this protein is 1-deoxy-D-xylulose 5-phosphate reductoisomerase.